Here is a 143-residue protein sequence, read N- to C-terminus: MAKKIVGFIKLQIPAGKANPSPPVGPALGQRGLNIMEFCKAFNAQTQGMEPGLPVPVVITAYADKSFTFVMKTPPATVLIKKAAKVDKGSSKPHTDKVGKITRAQAEEIAKTKMPDLTAADLDAAVRTIAGSARSMGITVEGV.

Belongs to the universal ribosomal protein uL11 family. As to quaternary structure, part of the ribosomal stalk of the 50S ribosomal subunit. Interacts with L10 and the large rRNA to form the base of the stalk. L10 forms an elongated spine to which L12 dimers bind in a sequential fashion forming a multimeric L10(L12)X complex. One or more lysine residues are methylated.

Functionally, forms part of the ribosomal stalk which helps the ribosome interact with GTP-bound translation factors. In Burkholderia mallei (strain NCTC 10247), this protein is Large ribosomal subunit protein uL11.